The following is a 396-amino-acid chain: Serine/threonine-protein kinase GRIK1 (396 aa).

The tract at residues 22–65 (ERSRHSPNPYDDDTYSHDSGETSNPGGDDEEGEEEEEVEELSRS) is disordered. Acidic residues predominate over residues 48 to 60 (GDDEEGEEEEEVE). A Protein kinase domain is found at 108-369 (FVRERKIGSG…LKAVAEHPWI (262 aa)). ATP is bound by residues 114–122 (IGSGSYGKV) and Lys137. Thr154 bears the Phosphothreonine; by autocatalysis mark. Asp239 serves as the catalytic Proton acceptor. The residue at position 261 (Ser261) is a Phosphoserine; by KIN10.

It belongs to the protein kinase superfamily. Ser/Thr protein kinase family. In terms of assembly, associates with the SNF1-related protein kinase (SnRK) complex. Interacts with AL1, a geminivirus (TGMV) protein essential for viral replication. As to expression, expressed in shoot apical meristem, leaf primordium and emerging petiole (at protein level).

It is found in the cytoplasm. It localises to the nucleus. It catalyses the reaction L-seryl-[protein] + ATP = O-phospho-L-seryl-[protein] + ADP + H(+). It carries out the reaction L-threonyl-[protein] + ATP = O-phospho-L-threonyl-[protein] + ADP + H(+). Its activity is regulated as follows. Activated when autophosphorylated at Thr-154 and inactivated when phosphorylated at Ser-261 by SnRK1.1/KIN10. Activates SnRK1.1/KIN10 and SnRK1.2/KIN11 by phosphorylation of their activation-loop 'Thr-198' and 'Thr-176', respectively. Required for the regulation by SnRK1 kinases of the transcription of a large set of genes, the modification the activity of metabolic enzymes, and the control of various nutrient-responsive cellular developmental processes. The protein is Serine/threonine-protein kinase GRIK1 (GRIK1) of Arabidopsis thaliana (Mouse-ear cress).